Consider the following 256-residue polypeptide: Pro-opiomelanocortin (256 aa).

A signal peptide spans 1-26 (MPRSCYSRSGTLLLALLLQISMEVRG). An intrachain disulfide couples Cys-28 to Cys-50. O-linked (GalNAc...) threonine glycosylation occurs at Thr-71. Phe-87 is subject to Phenylalanine amide. The segment at 88-120 (GRGNSSGASQKREEEAAAADPGFHGDGVEPGLR) is disordered. The N-linked (GlcNAc...) asparagine glycan is linked to Asn-91. Residues 100–122 (EEEAAAADPGFHGDGVEPGLRED) constitute a propeptide that is removed on maturation. Ser-125 carries the N-acetylserine; in Corticotropin modification. A Valine amide modification is found at Val-137. Residue Ser-155 is modified to Phosphoserine.

It belongs to the POMC family. Post-translationally, specific enzymatic cleavages at paired basic residues yield the different active peptides. ACTH and MSH are produced by the pituitary gland.

It is found in the secreted. Its function is as follows. ACTH stimulates the adrenal glands to release cortisol. In terms of biological role, MSH (melanocyte-stimulating hormone) increases the pigmentation of skin by increasing melanin production in melanocytes. Functionally, beta-endorphin and Met-enkephalin are endogenous opiates. Stimulates the adrenal glands to release cortisol. Its function is as follows. Anorexigenic peptide. Increases the pigmentation of skin by increasing melanin production in melanocytes. In terms of biological role, increases the pigmentation of skin by increasing melanin production in melanocytes. Functionally, endogenous orexigenic opiate. Endogenous opiate. The sequence is that of Pro-opiomelanocortin (POMC) from Cavia porcellus (Guinea pig).